The sequence spans 204 residues: N-(5'-phosphoribosyl)anthranilate isomerase (204 aa).

The protein belongs to the TrpF family.

It catalyses the reaction N-(5-phospho-beta-D-ribosyl)anthranilate = 1-(2-carboxyphenylamino)-1-deoxy-D-ribulose 5-phosphate. Its pathway is amino-acid biosynthesis; L-tryptophan biosynthesis; L-tryptophan from chorismate: step 3/5. The protein is N-(5'-phosphoribosyl)anthranilate isomerase of Bacillus anthracis (strain A0248).